A 378-amino-acid polypeptide reads, in one-letter code: MKILVDENMPYARDLFSRLGEVIAVPGRPIPVAQLADADALMVRSVTKVNESLLAGKPIKFVGTATAGTDHVDEAWLKQAGIGFSAAPGCNAIAVVEYVFSSLLMLAERDGFSLHDRTVGIVGVGNVGRRLQARLEALGIKTLLCDPPRADRGDEGDFRSLDELVQRADILTFHTPLFKDGPYKTLHLADEKLIRSLKPGAILINACRGAVVDNTALLTCLNEGQKLSVVLDVWEGEPELNVELLTKVDIGTPHIAGYTLEGKARGTTQVFEAYSKFIGHEQHVALDTLLPAPEFGRITLHGPLDQPTLKRLVHLVYDVRRDDAPLRKVAGIPGEFDKLRKNYLERREWSSLYVICDDASAASLLCKLGFNAVHHPAR.

Substrate is bound by residues serine 45 and threonine 66. Positions 146 and 175 each coordinate NAD(+). Arginine 208 is a catalytic residue. Position 232 (aspartate 232) interacts with NAD(+). Glutamate 237 is a catalytic residue. Histidine 254 functions as the Proton donor in the catalytic mechanism. Position 257 (glycine 257) interacts with NAD(+). Tyrosine 258 lines the substrate pocket.

It belongs to the D-isomer specific 2-hydroxyacid dehydrogenase family. PdxB subfamily. As to quaternary structure, homodimer.

It is found in the cytoplasm. It carries out the reaction 4-phospho-D-erythronate + NAD(+) = (R)-3-hydroxy-2-oxo-4-phosphooxybutanoate + NADH + H(+). Its pathway is cofactor biosynthesis; pyridoxine 5'-phosphate biosynthesis; pyridoxine 5'-phosphate from D-erythrose 4-phosphate: step 2/5. Its function is as follows. Catalyzes the oxidation of erythronate-4-phosphate to 3-hydroxy-2-oxo-4-phosphonooxybutanoate. The sequence is that of Erythronate-4-phosphate dehydrogenase from Shigella flexneri serotype 5b (strain 8401).